The sequence spans 301 residues: Acetyl-coenzyme A carboxylase carboxyl transferase subunit beta (301 aa).

The region spanning 25 to 294 is the CoA carboxyltransferase N-terminal domain; it reads LWIKCPETGE…SAANDVTRGA (270 aa).

The protein belongs to the AccD/PCCB family. Acetyl-CoA carboxylase is a heterohexamer composed of biotin carboxyl carrier protein (AccB), biotin carboxylase (AccC) and two subunits each of ACCase subunit alpha (AccA) and ACCase subunit beta (AccD).

It is found in the cytoplasm. The enzyme catalyses N(6)-carboxybiotinyl-L-lysyl-[protein] + acetyl-CoA = N(6)-biotinyl-L-lysyl-[protein] + malonyl-CoA. Its pathway is lipid metabolism; malonyl-CoA biosynthesis; malonyl-CoA from acetyl-CoA: step 1/1. Functionally, component of the acetyl coenzyme A carboxylase (ACC) complex. Biotin carboxylase (BC) catalyzes the carboxylation of biotin on its carrier protein (BCCP) and then the CO(2) group is transferred by the transcarboxylase to acetyl-CoA to form malonyl-CoA. The protein is Acetyl-coenzyme A carboxylase carboxyl transferase subunit beta of Rhizobium etli (strain ATCC 51251 / DSM 11541 / JCM 21823 / NBRC 15573 / CFN 42).